A 340-amino-acid chain; its full sequence is Uroporphyrinogen decarboxylase (340 aa).

Residues 21-25 (RQAGR), Asp-71, Tyr-148, Ser-203, and His-316 each bind substrate.

It belongs to the uroporphyrinogen decarboxylase family. As to quaternary structure, homodimer.

It is found in the cytoplasm. The catalysed reaction is uroporphyrinogen III + 4 H(+) = coproporphyrinogen III + 4 CO2. Its pathway is porphyrin-containing compound metabolism; protoporphyrin-IX biosynthesis; coproporphyrinogen-III from 5-aminolevulinate: step 4/4. Functionally, catalyzes the decarboxylation of four acetate groups of uroporphyrinogen-III to yield coproporphyrinogen-III. In Campylobacter lari (strain RM2100 / D67 / ATCC BAA-1060), this protein is Uroporphyrinogen decarboxylase.